Reading from the N-terminus, the 269-residue chain is Energy-coupling factor transporter ATP-binding protein EcfA1 (269 aa).

The 235-residue stretch at 8 to 242 (IEFKDVSFQY…EEALISVGLD (235 aa)) folds into the ABC transporter domain. 42-49 (GHNGSGKS) is an ATP binding site.

It belongs to the ABC transporter superfamily. Energy-coupling factor EcfA family. As to quaternary structure, forms a stable energy-coupling factor (ECF) transporter complex composed of 2 membrane-embedded substrate-binding proteins (S component), 2 ATP-binding proteins (A component) and 2 transmembrane proteins (T component).

It localises to the cell membrane. Its function is as follows. ATP-binding (A) component of a common energy-coupling factor (ECF) ABC-transporter complex. Unlike classic ABC transporters this ECF transporter provides the energy necessary to transport a number of different substrates. This chain is Energy-coupling factor transporter ATP-binding protein EcfA1, found in Staphylococcus epidermidis (strain ATCC 35984 / DSM 28319 / BCRC 17069 / CCUG 31568 / BM 3577 / RP62A).